The chain runs to 421 residues: NAD-specific glutamate dehydrogenase (421 aa).

Lysine 71 and lysine 95 together coordinate substrate. Residue lysine 107 is the Proton donor of the active site. Threonine 191 and asparagine 222 together coordinate NAD(+). Serine 355 contributes to the substrate binding site.

This sequence belongs to the Glu/Leu/Phe/Val dehydrogenases family. In terms of assembly, homohexamer.

The enzyme catalyses L-glutamate + NAD(+) + H2O = 2-oxoglutarate + NH4(+) + NADH + H(+). The protein is NAD-specific glutamate dehydrogenase (gluD) of Clostridioides difficile (Peptoclostridium difficile).